Reading from the N-terminus, the 530-residue chain is Calcium-dependent protein kinase 14 (530 aa).

Residue glycine 2 is the site of N-myristoyl glycine attachment. Residues 54 to 312 enclose the Protein kinase domain; sequence YKLGRELGRG…AQQVLDHPWI (259 aa). ATP contacts are provided by residues 60–68 and lysine 83; that span reads LGRGEFGVT. Aspartate 178 acts as the Proton acceptor in catalysis. Position 218 is a phosphoserine (serine 218). The tract at residues 318–348 is autoinhibitory domain; sequence ASNVSLGETVRARLKQFSVMNKLKKRALRVI. 4 EF-hand domains span residues 355–390, 391–426, 427–462, and 463–498; these read EETS…LGIV, VPQD…IRKL, GNDE…DVDT, and TSEE…GTDW. Positions 368, 370, 374, 379, 404, 406, 408, 410, 415, 440, 442, 444, 446, 451, 476, 478, 480, and 482 each coordinate Ca(2+). At serine 484 the chain carries Phosphoserine. Glutamate 487 contacts Ca(2+).

Belongs to the protein kinase superfamily. Ser/Thr protein kinase family. CDPK subfamily.

Its subcellular location is the membrane. It carries out the reaction L-seryl-[protein] + ATP = O-phospho-L-seryl-[protein] + ADP + H(+). The catalysed reaction is L-threonyl-[protein] + ATP = O-phospho-L-threonyl-[protein] + ADP + H(+). Activated by calcium. Autophosphorylation may play an important role in the regulation of the kinase activity. Functionally, may play a role in signal transduction pathways that involve calcium as a second messenger. The polypeptide is Calcium-dependent protein kinase 14 (CPK14) (Arabidopsis thaliana (Mouse-ear cress)).